A 140-amino-acid polypeptide reads, in one-letter code: Lymphocyte antigen 6 complex locus protein G5c (140 aa).

Positions 1 to 41 (MRFMAGPAGSQNPGPMCFHSSLQALYTVLLIVLVMMSLVFG) are cleaved as a signal peptide. One can recognise a UPAR/Ly6 domain in the interval 60 to 140 (LRCYRCLLET…SQCCFLGFLQ (81 aa)). 4 disulfides stabilise this stretch: Cys62/Cys89, Cys65/Cys74, Cys81/Cys107, and Cys116/Cys133. N-linked (GlcNAc...) asparagine glycosylation is present at Asn96.

Forms oligomers. N-glycosylated.

It localises to the secreted. May have a role in hematopoietic cell differentiation. The sequence is that of Lymphocyte antigen 6 complex locus protein G5c (LY6G5C) from Macaca mulatta (Rhesus macaque).